We begin with the raw amino-acid sequence, 640 residues long: Threonine--tRNA ligase (640 aa).

The region spanning 1 to 60 (MKITFPDGAVKEFEPGVSTADIAASISPGLKKKALAGKLNGELLDLVTPIHEDGAIEIVT) is the TGS domain. Residues 241–538 (DHRKLGKELE…LIEEYKGAFP (298 aa)) are catalytic. Zn(2+)-binding residues include Cys334, His385, and His515.

It belongs to the class-II aminoacyl-tRNA synthetase family. As to quaternary structure, homodimer. Zn(2+) serves as cofactor.

The protein localises to the cytoplasm. The catalysed reaction is tRNA(Thr) + L-threonine + ATP = L-threonyl-tRNA(Thr) + AMP + diphosphate + H(+). Functionally, catalyzes the attachment of threonine to tRNA(Thr) in a two-step reaction: L-threonine is first activated by ATP to form Thr-AMP and then transferred to the acceptor end of tRNA(Thr). Also edits incorrectly charged L-seryl-tRNA(Thr). The sequence is that of Threonine--tRNA ligase from Listeria monocytogenes serovar 1/2a (strain ATCC BAA-679 / EGD-e).